We begin with the raw amino-acid sequence, 180 residues long: Shikimate kinase (180 aa).

15-20 (GAGKTT) contributes to the ATP binding site. Thr19 serves as a coordination point for Mg(2+). Positions 37, 61, and 83 each coordinate substrate. Residue Arg121 participates in ATP binding. Arg140 is a binding site for substrate.

Belongs to the shikimate kinase family. As to quaternary structure, monomer. It depends on Mg(2+) as a cofactor.

The protein resides in the cytoplasm. It catalyses the reaction shikimate + ATP = 3-phosphoshikimate + ADP + H(+). It functions in the pathway metabolic intermediate biosynthesis; chorismate biosynthesis; chorismate from D-erythrose 4-phosphate and phosphoenolpyruvate: step 5/7. Catalyzes the specific phosphorylation of the 3-hydroxyl group of shikimic acid using ATP as a cosubstrate. The protein is Shikimate kinase of Psychrobacter sp. (strain PRwf-1).